The sequence spans 89 residues: Probable Fe(2+)-trafficking protein (89 aa).

It belongs to the Fe(2+)-trafficking protein family.

In terms of biological role, could be a mediator in iron transactions between iron acquisition and iron-requiring processes, such as synthesis and/or repair of Fe-S clusters in biosynthetic enzymes. This Stenotrophomonas maltophilia (strain K279a) protein is Probable Fe(2+)-trafficking protein.